Reading from the N-terminus, the 930-residue chain is Short transient receptor potential channel 6 (930 aa).

The segment at 1-27 is disordered; it reads MSQSPRFVTRRGGSLKAAPGAGTRRNE. Residues 1–437 lie on the Cytoplasmic side of the membrane; sequence MSQSPRFVTR…CSKMGKILRG (437 aa). 4 ANK repeats span residues 96–125, 131–160, 162–188, and 217–246; these read IEEE…SLNV, MGQN…LSRV, DALL…FAEG, and HDVT…RIER. Residues 438–458 form a helical membrane-spanning segment; the sequence is PFMKFVAHAASFTIFLGLLVM. Residues 459–486 are Extracellular-facing; the sequence is NAADRFEGTKLLPNETSTDNARQLFRMK. The helical transmembrane segment at 487 to 507 threads the bilayer; that stretch reads TSCFSWMEMLIISWVIGMIWA. Over 508–520 the chain is Cytoplasmic; sequence ECKEIWTQGPKEY. Residues 521–541 traverse the membrane as a helical segment; the sequence is LFELWNMLDFGMLAIFAASFI. At 542–591 the chain is on the extracellular side; sequence ARFMAFWHASKAQSIIDANDTLKDLTKVTLGDNVKYYNLARIKWDPTDPQ. An N-linked (GlcNAc...) asparagine glycan is attached at N560. A helical membrane pass occupies residues 592-612; it reads IISEGLYAIAVVLSFSRIAYI. At 613-635 the chain is on the cytoplasmic side; sequence LPANESFGPLQISLGRTVKDIFK. Residues 636-656 traverse the membrane as a helical segment; that stretch reads FMVIFIMVFVAFMIGMFNLYS. Topologically, residues 657–705 are extracellular; the sequence is YYIGAKQNEAFTTVEESFKTLFWAIFGLSEVKSVVINYNHKFIENIGYV. The chain crosses the membrane as a helical span at residues 706-726; it reads LYGVYNVTMVIVLLNMLIAMI. The Cytoplasmic portion of the chain corresponds to 727–930; the sequence is NSSFQEIEDD…LEPKLEESRR (204 aa). At S814 the chain carries Phosphoserine.

The protein belongs to the transient receptor (TC 1.A.4) family. STrpC subfamily. TRPC6 sub-subfamily. As to quaternary structure, homodimer; forms channel complex. Interacts with MX1 and RNF24. Phosphorylated by FYN, leading to an increase of TRPC6 channel activity. In terms of processing, N-glycosylated. As to expression, lung and brain.

The protein localises to the cell membrane. The catalysed reaction is Ca(2+)(in) = Ca(2+)(out). In terms of biological role, forms a receptor-activated non-selective calcium permeant cation channel. Probably is operated by a phosphatidylinositol second messenger system activated by receptor tyrosine kinases or G-protein coupled receptors. Activated by diacylglycerol (DAG) in a membrane-delimited fashion, independently of protein kinase C. Seems not to be activated by intracellular calcium store depletion. The chain is Short transient receptor potential channel 6 from Mus musculus (Mouse).